Reading from the N-terminus, the 505-residue chain is Trans-cinnamate 4-monooxygenase (505 aa).

Residues 3–23 form a helical membrane-spanning segment; the sequence is LLLIEKTLVALFAAIIGAILI. (E)-cinnamate contacts are provided by residues 213–218 and Ala-306; that span reads RSRLAQ. Residue Cys-447 coordinates heme.

Belongs to the cytochrome P450 family. Heme serves as cofactor.

It is found in the membrane. It catalyses the reaction (E)-cinnamate + reduced [NADPH--hemoprotein reductase] + O2 = (E)-4-coumarate + oxidized [NADPH--hemoprotein reductase] + H2O + H(+). The protein operates within phenylpropanoid metabolism; trans-4-coumarate biosynthesis; trans-4-coumarate from trans-cinnamate: step 1/1. With respect to regulation, inactivated by piperonylic acid. Its function is as follows. Catalyzes the first oxidative step of the phenylpropanoid pathway in higher plants by transforming trans-cinnamate into p-coumarate. The compounds formed by this pathway are essential components for lignification, pollination, and defense against ultraviolet light, predators and pathogens. Can also use 2-naphthoic acid as substrate. In Helianthus tuberosus (Jerusalem artichoke), this protein is Trans-cinnamate 4-monooxygenase.